Here is a 356-residue protein sequence, read N- to C-terminus: Arginine kinase Scy s 2 (356 aa).

The Phosphagen kinase N-terminal domain occupies 9 to 91; sequence KLEEGFKKLE…FDPIIEDYHK (83 aa). 64–68 serves as a coordination point for L-arginine; sequence GVGVY. Residues 119-356 enclose the Phosphagen kinase C-terminal domain; that stretch reads FVISTRVRCG…LELIKMEKEM (238 aa). ATP contacts are provided by residues 122–126 and H185; that span reads STRVR. E225 contacts L-arginine. R229 lines the ATP pocket. Residue C271 participates in L-arginine binding. ATP contacts are provided by residues 280-284 and 309-314; these read RASVH and RGTRGE. E314 is an L-arginine binding site.

It belongs to the ATP:guanido phosphotransferase family. Muscle (at protein level).

It carries out the reaction L-arginine + ATP = N(omega)-phospho-L-arginine + ADP + H(+). In terms of biological role, catalyzes the reversible transfer of high energy ATP gamma-phosphate group to L-arginine. This Scylla serrata (Mud crab) protein is Arginine kinase Scy s 2.